The chain runs to 537 residues: 2-succinyl-5-enolpyruvyl-6-hydroxy-3-cyclohexene-1-carboxylate synthase (537 aa).

It belongs to the TPP enzyme family. MenD subfamily. Homodimer. Mg(2+) serves as cofactor. Requires Mn(2+) as cofactor. It depends on thiamine diphosphate as a cofactor.

It catalyses the reaction isochorismate + 2-oxoglutarate + H(+) = 5-enolpyruvoyl-6-hydroxy-2-succinyl-cyclohex-3-ene-1-carboxylate + CO2. Its pathway is quinol/quinone metabolism; 1,4-dihydroxy-2-naphthoate biosynthesis; 1,4-dihydroxy-2-naphthoate from chorismate: step 2/7. It participates in quinol/quinone metabolism; menaquinone biosynthesis. Functionally, catalyzes the thiamine diphosphate-dependent decarboxylation of 2-oxoglutarate and the subsequent addition of the resulting succinic semialdehyde-thiamine pyrophosphate anion to isochorismate to yield 2-succinyl-5-enolpyruvyl-6-hydroxy-3-cyclohexene-1-carboxylate (SEPHCHC). The polypeptide is 2-succinyl-5-enolpyruvyl-6-hydroxy-3-cyclohexene-1-carboxylate synthase (Dechloromonas aromatica (strain RCB)).